The primary structure comprises 158 residues: Transcription elongation factor GreA (158 aa).

It belongs to the GreA/GreB family.

Functionally, necessary for efficient RNA polymerase transcription elongation past template-encoded arresting sites. The arresting sites in DNA have the property of trapping a certain fraction of elongating RNA polymerases that pass through, resulting in locked ternary complexes. Cleavage of the nascent transcript by cleavage factors such as GreA or GreB allows the resumption of elongation from the new 3'terminus. GreA releases sequences of 2 to 3 nucleotides. The chain is Transcription elongation factor GreA from Pelagibacter ubique (strain HTCC1062).